The sequence spans 621 residues: 5-aminolevulinate synthase, mitochondrial (621 aa).

Residues 76–95 (DAKGSLAGRPVHHKAATEST) form a disordered region. Residues Arg122 and Ser234 each contribute to the substrate site. Residues Ser286, His314, and Thr359 each contribute to the pyridoxal 5'-phosphate site. The active site involves Lys362. N6-(pyridoxal phosphate)lysine is present on Lys362. Pyridoxal 5'-phosphate is bound by residues Thr391 and Thr392. Substrate is bound at residue Thr477.

Belongs to the class-II pyridoxal-phosphate-dependent aminotransferase family. As to quaternary structure, homodimer. Pyridoxal 5'-phosphate is required as a cofactor.

It localises to the mitochondrion matrix. The enzyme catalyses succinyl-CoA + glycine + H(+) = 5-aminolevulinate + CO2 + CoA. Its pathway is porphyrin-containing compound metabolism; protoporphyrin-IX biosynthesis; 5-aminolevulinate from glycine: step 1/1. Functionally, catalyzes the synthesis of 5-aminolevulinate (ALA) from succinyl-CoA and glycine, the first and rate-limiting step in heme biosynthesis. The chain is 5-aminolevulinate synthase, mitochondrial (hem1) from Agaricus bisporus (White button mushroom).